Here is a 433-residue protein sequence, read N- to C-terminus: Trigger factor (433 aa).

The 86-residue stretch at 166–251 (GDFAVIDFEG…LHEIQERAKP (86 aa)) folds into the PPIase FKBP-type domain.

It belongs to the FKBP-type PPIase family. Tig subfamily.

Its subcellular location is the cytoplasm. The catalysed reaction is [protein]-peptidylproline (omega=180) = [protein]-peptidylproline (omega=0). Functionally, involved in protein export. Acts as a chaperone by maintaining the newly synthesized protein in an open conformation. Functions as a peptidyl-prolyl cis-trans isomerase. This chain is Trigger factor, found in Aliarcobacter butzleri (strain RM4018) (Arcobacter butzleri).